The primary structure comprises 167 residues: Small ribosomal subunit protein uS5 (167 aa).

Positions 12-75 constitute an S5 DRBM domain; that stretch reads LQEKLIAVNR…EKARRNMVTV (64 aa).

The protein belongs to the universal ribosomal protein uS5 family. Part of the 30S ribosomal subunit. Contacts proteins S4 and S8.

Functionally, with S4 and S12 plays an important role in translational accuracy. Its function is as follows. Located at the back of the 30S subunit body where it stabilizes the conformation of the head with respect to the body. In Shewanella oneidensis (strain ATCC 700550 / JCM 31522 / CIP 106686 / LMG 19005 / NCIMB 14063 / MR-1), this protein is Small ribosomal subunit protein uS5.